An 837-amino-acid polypeptide reads, in one-letter code: Translation initiation factor IF-2 (837 aa).

Residues 97–139 are compositionally biased toward basic and acidic residues; it reads AEEIEAEQRRELEEQRAAEEAARLKAEQEARERAEEEARRQAE. Positions 97–253 are disordered; it reads AEEIEAEQRR…QHGFQSPTGP (157 aa). Residues 140–175 are compositionally biased toward low complexity; the sequence is AAKAQTAETAAPAAAESASSAEPAQVVAAVEAAAPA. The segment covering 176-197 has biased composition (basic and acidic residues); it reads PERKKEEPRRVEKPRSDDDERR. A compositionally biased stretch (basic residues) spans 198–208; the sequence is DRKHAQHRPSL. Positions 219–229 are enriched in basic and acidic residues; the sequence is RSGEDEADGFR. Positions 230 to 244 are enriched in basic residues; the sequence is RGGRGGKSKLKKRNQ. Residues 337–504 enclose the tr-type G domain; sequence ARAPVVTVMG…AVLLQAEILE (168 aa). Positions 346-353 are G1; the sequence is GHVDHGKT. 346–353 lines the GTP pocket; that stretch reads GHVDHGKT. The interval 371–375 is G2; sequence GITQH. A G3 region spans residues 392 to 395; that stretch reads DTPG. GTP contacts are provided by residues 392–396 and 446–449; these read DTPGH and NKID. Residues 446 to 449 form a G4 region; sequence NKID. Positions 482–484 are G5; the sequence is SAK.

It belongs to the TRAFAC class translation factor GTPase superfamily. Classic translation factor GTPase family. IF-2 subfamily.

Its subcellular location is the cytoplasm. One of the essential components for the initiation of protein synthesis. Protects formylmethionyl-tRNA from spontaneous hydrolysis and promotes its binding to the 30S ribosomal subunits. Also involved in the hydrolysis of GTP during the formation of the 70S ribosomal complex. In Stutzerimonas stutzeri (strain A1501) (Pseudomonas stutzeri), this protein is Translation initiation factor IF-2.